A 235-amino-acid chain; its full sequence is Uridylate kinase (235 aa).

9 to 12 (KLSG) contacts ATP. G51 contacts UMP. ATP-binding residues include G52 and R56. Residues D71 and 132–139 (TGNPYFTT) each bind UMP. ATP-binding residues include T159, Y165, and D168.

Belongs to the UMP kinase family. As to quaternary structure, homohexamer.

The protein localises to the cytoplasm. The catalysed reaction is UMP + ATP = UDP + ADP. It functions in the pathway pyrimidine metabolism; CTP biosynthesis via de novo pathway; UDP from UMP (UMPK route): step 1/1. Its activity is regulated as follows. Inhibited by UTP. Its function is as follows. Catalyzes the reversible phosphorylation of UMP to UDP. In Cytophaga hutchinsonii (strain ATCC 33406 / DSM 1761 / CIP 103989 / NBRC 15051 / NCIMB 9469 / D465), this protein is Uridylate kinase.